The chain runs to 55 residues: MRQFDPWPVFFRREWSRNWPFLVGFAVTGAIITKMSLGFTEEERKNSRFAQRHKN.

The transit peptide at 1-15 (MRQFDPWPVFFRREW) directs the protein to the mitochondrion. A helical transmembrane segment spans residues 20-39 (PFLVGFAVTGAIITKMSLGF).

The protein belongs to the ATPase 6 subunit family.

It localises to the mitochondrion inner membrane. Its function is as follows. Mitochondrial membrane ATP synthase (F(1)F(0) ATP synthase or Complex V) produces ATP from ADP in the presence of a proton gradient across the membrane which is generated by electron transport complexes of the respiratory chain. F-type ATPases consist of two structural domains, F(1) - containing the extramembraneous catalytic core and F(0) - containing the membrane proton channel, linked together by a central stalk and a peripheral stalk. During catalysis, ATP synthesis in the catalytic domain of F(1) is coupled via a rotary mechanism of the central stalk subunits to proton translocation. Part of the complex F(0) domain. Confers tolerance to several abiotic stresses (e.g. salt, mannitol, drought, oxidative and cold stresses), probably by providing additional energy needed for cell homeostasis. This chain is ATP synthase small subunit 6, mitochondrial, found in Solanum tuberosum (Potato).